A 474-amino-acid chain; its full sequence is 3-isopropylmalate dehydratase large subunit (474 aa).

Residues C355, C415, and C418 each coordinate [4Fe-4S] cluster.

Belongs to the aconitase/IPM isomerase family. LeuC type 1 subfamily. As to quaternary structure, heterodimer of LeuC and LeuD. The cofactor is [4Fe-4S] cluster.

The catalysed reaction is (2R,3S)-3-isopropylmalate = (2S)-2-isopropylmalate. Its pathway is amino-acid biosynthesis; L-leucine biosynthesis; L-leucine from 3-methyl-2-oxobutanoate: step 2/4. Catalyzes the isomerization between 2-isopropylmalate and 3-isopropylmalate, via the formation of 2-isopropylmaleate. In Shewanella sp. (strain MR-4), this protein is 3-isopropylmalate dehydratase large subunit.